The sequence spans 443 residues: Threonine/serine transporter TdcC (443 aa).

11 helical membrane passes run 22–42 (TTWTLGLFGTAIGAGVLFFPI), 44–64 (AGFGGLIPILVMLVLAYPIAF), 97–117 (GVVITFLYFFAICPLLWIYGV), 135–155 (ALNRGFVALFLLLLMAVIIWF), 163–183 (VMSFLVWPFIASLVLISLSLI), 207–227 (ILVTVWLGISIMVFSFNFSPI), 259–279 (ASILMVAVVMFFAFSCLFALS), 319–339 (ASIIALVAIFKSFFGHYLGTL), 366–386 (LSMVFIMGSTWLVAYVNPNIL), 389–409 (IEAMGAPIIASLLCLLPMYAI), and 422–442 (IDNVFVTAIGLLTISNIVYKV).

This sequence belongs to the amino acid/polyamine transporter 2 family. SdaC/TdcC subfamily.

The protein localises to the cell inner membrane. The enzyme catalyses L-threonine(in) + H(+)(in) = L-threonine(out) + H(+)(out). The catalysed reaction is L-serine(in) + H(+)(in) = L-serine(out) + H(+)(out). Its function is as follows. Involved in the import of threonine and serine into the cell, with the concomitant import of a proton (symport system). The sequence is that of Threonine/serine transporter TdcC from Escherichia fergusonii (strain ATCC 35469 / DSM 13698 / CCUG 18766 / IAM 14443 / JCM 21226 / LMG 7866 / NBRC 102419 / NCTC 12128 / CDC 0568-73).